Consider the following 194-residue polypeptide: Thymidine kinase (194 aa).

ATP contacts are provided by residues 15–22 (GCMFSGKT) and 88–91 (DELH). Catalysis depends on E89, which acts as the Proton acceptor. Zn(2+) is bound by residues C148, C151, C186, and C189.

It belongs to the thymidine kinase family. As to quaternary structure, homotetramer.

The protein resides in the cytoplasm. The enzyme catalyses thymidine + ATP = dTMP + ADP + H(+). The sequence is that of Thymidine kinase from Roseiflexus castenholzii (strain DSM 13941 / HLO8).